Here is a 379-residue protein sequence, read N- to C-terminus: dTDP-3-amino-3,4,6-trideoxy-alpha-D-glucose transaminase (379 aa).

Residues Gly67, Gln167, 188-193 (SFYPGK), Tyr221, Tyr227, 235-237 (NSR), and Tyr318 each bind pyridoxal 5'-phosphate. Lys193 carries the post-translational modification N6-(pyridoxal phosphate)lysine.

This sequence belongs to the degT/dnrJ/eryC1 family. In terms of assembly, homodimer. Pyridoxal 5'-phosphate is required as a cofactor.

The enzyme catalyses dTDP-3-amino-3,4,6-trideoxy-alpha-D-glucose + 2-oxoglutarate = dTDP-3-dehydro-4,6-dideoxy-alpha-D-glucose + L-glutamate. Its pathway is antibiotic biosynthesis. Its function is as follows. Involved in the biosynthesis of dTDP-alpha-D-desosamine, a sugar found in several bacterial macrolide antibiotics. Catalyzes the reversible transfer of the amino group from L-glutamate to the C-3 position of dTDP-3-keto-4,6-deoxyglucose to yield dTDP-3-amino-3,4,6-trideoxyglucose. The polypeptide is dTDP-3-amino-3,4,6-trideoxy-alpha-D-glucose transaminase (Streptomyces venezuelae).